Consider the following 123-residue polypeptide: Small ribosomal subunit protein uS13 (123 aa).

The segment at 96 to 123 is disordered; that stretch reads GLPVRGQRTKTNARTRKGPKKTVAGKKK.

Belongs to the universal ribosomal protein uS13 family. In terms of assembly, part of the 30S ribosomal subunit. Forms a loose heterodimer with protein S19. Forms two bridges to the 50S subunit in the 70S ribosome.

Located at the top of the head of the 30S subunit, it contacts several helices of the 16S rRNA. In the 70S ribosome it contacts the 23S rRNA (bridge B1a) and protein L5 of the 50S subunit (bridge B1b), connecting the 2 subunits; these bridges are implicated in subunit movement. Contacts the tRNAs in the A and P-sites. In Nocardia farcinica (strain IFM 10152), this protein is Small ribosomal subunit protein uS13.